A 549-amino-acid chain; its full sequence is DNA 3'-5' helicase XPB (549 aa).

The required for protein stability or solubility stretch occupies residues 1-130; it reads MTDGPLIVQS…RNKKIAPMLG (130 aa). One can recognise a Helicase ATP-binding domain in the interval 190–344; sequence ADSFWAGGSG…DVFSLIGPKR (155 aa). 203 to 210 serves as a coordination point for ATP; the sequence is LPCGAGKT. A DEAH box motif is present at residues 298 to 301; sequence DEVH. One can recognise a Helicase C-terminal domain in the interval 399-545; it reads VVKSILAKHP…YIIRDADDLL (147 aa).

This sequence belongs to the helicase family. RAD25/XPB subfamily. Monomer. Requires Mn(2+) as cofactor. Mg(2+) is required as a cofactor.

It carries out the reaction Couples ATP hydrolysis with the unwinding of duplex DNA by translocating in the 3'-5' direction.. The catalysed reaction is ATP + H2O = ADP + phosphate + H(+). In terms of biological role, ATP-dependent 3'-5' DNA helicase, unwinds 3'-overhangs, 3'- flaps, and splayed-arm DNA substrates but not 5'-overhangs, 5'-flap substrates, 3-way junctions or Holliday junctions. Not highly efficient in vitro. Requires ATP hydrolysis for helicase activity; the ATPase activity is DNA-dependent and requires a minimum of 4 single-stranded nucleotides (nt) with 6-10 nt providing all necessary interactions for full processive unwinding. The ATPase prefers ATP over CTP or GTP, is almost inactive with TTP. DNA helicase activity requires ATP or dATP and only acts when the 3'-overhang is &gt;20 nt. Capable of unwinding a DNA:RNA hybrid if the 3'-overhang is DNA. Also catalyzes ATP-independent annealing of complementary DNA strands; annealing requires Mg(2+). This chain is DNA 3'-5' helicase XPB, found in Mycobacterium tuberculosis (strain ATCC 25618 / H37Rv).